The chain runs to 394 residues: Na(+)/H(+) antiporter NhaA 2 (394 aa).

The next 11 helical transmembrane spans lie at 13–33 (FGGVLLIIATILALLFQNGFL), 58–78 (LILWVNDGLMAIFFFVVGLEL), 93–113 (IALPTIGALGGVILPAVIFWA), 124–144 (GWAIPTATDIAFALGVLMLLG), 153–173 (IFLLTLAIIDDLCAIVIIAIF), 176–196 (TKLSFISFVIAGICLFALWVL), 208–228 (ILVTLILWVSVLKSGVHATIA), 260–280 (YFILPVFAFVNAGVSLAGVQI), 291–311 (IFFGLLIGKQVGVFLFSYIFI), 327–347 (FYGVCILTGIGFTMSLFVNSL), and 361–381 (LGILLASFTAGVIGYIYLLVF).

The protein belongs to the NhaA Na(+)/H(+) (TC 2.A.33) antiporter family.

It is found in the cell inner membrane. The enzyme catalyses Na(+)(in) + 2 H(+)(out) = Na(+)(out) + 2 H(+)(in). Functionally, na(+)/H(+) antiporter that extrudes sodium in exchange for external protons. This is Na(+)/H(+) antiporter NhaA 2 from Campylobacter fetus subsp. fetus (strain 82-40).